Here is a 199-residue protein sequence, read N- to C-terminus: ATP-dependent Clp protease proteolytic subunit (199 aa).

The Nucleophile role is filled by Ser97. His122 is a catalytic residue.

It belongs to the peptidase S14 family. Fourteen ClpP subunits assemble into 2 heptameric rings which stack back to back to give a disk-like structure with a central cavity, resembling the structure of eukaryotic proteasomes.

It is found in the cytoplasm. The catalysed reaction is Hydrolysis of proteins to small peptides in the presence of ATP and magnesium. alpha-casein is the usual test substrate. In the absence of ATP, only oligopeptides shorter than five residues are hydrolyzed (such as succinyl-Leu-Tyr-|-NHMec, and Leu-Tyr-Leu-|-Tyr-Trp, in which cleavage of the -Tyr-|-Leu- and -Tyr-|-Trp bonds also occurs).. Its function is as follows. Cleaves peptides in various proteins in a process that requires ATP hydrolysis. Has a chymotrypsin-like activity. Plays a major role in the degradation of misfolded proteins. The polypeptide is ATP-dependent Clp protease proteolytic subunit (Pelobacter propionicus (strain DSM 2379 / NBRC 103807 / OttBd1)).